We begin with the raw amino-acid sequence, 258 residues long: GTP cyclohydrolase FolE2 (258 aa).

This sequence belongs to the GTP cyclohydrolase IV family.

It carries out the reaction GTP + H2O = 7,8-dihydroneopterin 3'-triphosphate + formate + H(+). It participates in cofactor biosynthesis; 7,8-dihydroneopterin triphosphate biosynthesis; 7,8-dihydroneopterin triphosphate from GTP: step 1/1. In terms of biological role, converts GTP to 7,8-dihydroneopterin triphosphate. The protein is GTP cyclohydrolase FolE2 of Lawsonia intracellularis (strain PHE/MN1-00).